The sequence spans 332 residues: Eukaryotic translation initiation factor 3 subunit H (332 aa).

One can recognise an MPN domain in the interval 18–153 (VQVDGLTVLK…LKAFRLSDEM (136 aa)). A disordered region spans residues 251–285 (QQQKENYLQRRQQENQSRIQRGEDPLPDEDLSKMF).

It belongs to the eIF-3 subunit H family. Component of the eukaryotic translation initiation factor 3 (eIF-3) complex.

It is found in the cytoplasm. In terms of biological role, component of the eukaryotic translation initiation factor 3 (eIF-3) complex, which is involved in protein synthesis of a specialized repertoire of mRNAs and, together with other initiation factors, stimulates binding of mRNA and methionyl-tRNAi to the 40S ribosome. The eIF-3 complex specifically targets and initiates translation of a subset of mRNAs involved in cell proliferation. This is Eukaryotic translation initiation factor 3 subunit H from Nematostella vectensis (Starlet sea anemone).